A 197-amino-acid chain; its full sequence is LexA repressor (197 aa).

Residues 28–47 (VREIARRFRITPRGALLHLI) constitute a DNA-binding region (H-T-H motif). Residues Ser119 and Lys156 each act as for autocatalytic cleavage activity in the active site.

The protein belongs to the peptidase S24 family. Homodimer.

It carries out the reaction Hydrolysis of Ala-|-Gly bond in repressor LexA.. Functionally, represses a number of genes involved in the response to DNA damage (SOS response), including recA and lexA. In the presence of single-stranded DNA, RecA interacts with LexA causing an autocatalytic cleavage which disrupts the DNA-binding part of LexA, leading to derepression of the SOS regulon and eventually DNA repair. The protein is LexA repressor of Thermotoga sp. (strain RQ2).